A 190-amino-acid chain; its full sequence is Cytoglobin (190 aa).

Residues 18 to 167 (ELSEAERKAV…IYSHVTAAYK (150 aa)) form the Globin domain. The cysteines at positions 38 and 83 are disulfide-linked. Heme b-binding residues include His81 and His113.

The protein belongs to the globin family. As to quaternary structure, monomeric. Homodimer; disulfide-linked in vitro. Also homooligomeric in vitro. In terms of processing, the formation of an intramolecular disulfide bond between cysteines Cys-38 and Cys-83 specifically enhances the nitrite reductase activity. In terms of tissue distribution, widely expressed. Highest expression in heart, stomach, bladder and small intestine.

It localises to the cytoplasm. It is found in the nucleus. The catalysed reaction is Fe(II)-heme b-[protein] + nitric oxide + O2 = Fe(III)-heme b-[protein] + nitrate. It carries out the reaction Fe(III)-heme b-[protein] + nitric oxide + H2O = Fe(II)-heme b-[protein] + nitrite + 2 H(+). The enzyme catalyses 2 superoxide + 2 H(+) = H2O2 + O2. It catalyses the reaction H2O2 + AH2 = A + 2 H2O. Its activity is regulated as follows. The nitric oxide dioxygenase activity is activated by a reducing system composed of cytochrome b5, its upstream reductase CYB5R3 and NADH. In terms of biological role, probable multifunctional globin with a hexacoordinated heme iron required for the catalysis of various reactions depending on redox condition of the cell as well as oxygen availability. Has a nitric oxide dioxygenase (NOD) activity and is most probably involved in cell-mediated and oxygen-dependent nitric oxide consumption. By scavenging this second messenger may regulate several biological processes including endothelium-mediated vasodilation and vascular tone. Under normoxic conditions functions as a nitric oxide dioxygenase (NOD) but under hypoxic conditions the globin may switch its function to that of a nitrite (NO2) reductase (NiR), generating nitric oxide. Could also have peroxidase and superoxide dismutase activities, detoxifying reactive oxygen species and protecting cells against oxidative stress. Also binds dioxygen with low affinity and could function as an oxygen sensor but has probably no function as a respiratory oxygen carrier. The protein is Cytoglobin of Homo sapiens (Human).